A 62-amino-acid chain; its full sequence is uncharacterized protein (62 aa).

The disordered stretch occupies residues 1–62; that stretch reads MTSTQNLKDK…PPKKSLSQLP (62 aa). Basic and acidic residues predominate over residues 7-29; that stretch reads LKDKFEEEIRQQKEGKGKKEKVW. Positions 32–43 are enriched in polar residues; it reads HSDSSYNKQTAV.

This is an uncharacterized protein from Dictyostelium discoideum (Social amoeba).